We begin with the raw amino-acid sequence, 378 residues long: Outer membrane protein (378 aa).

Positions 1 to 22 are cleaved as a signal peptide; sequence MRLRTALLATTLMAAAPVAANA. Positions 258–378 constitute an OmpA-like domain; that stretch reads PPAPTPARTY…QNRRVEIILH (121 aa).

Its subcellular location is the cell outer membrane. Its function is as follows. Growth enhancer. This chain is Outer membrane protein, found in Gluconacetobacter diazotrophicus (strain ATCC 49037 / DSM 5601 / CCUG 37298 / CIP 103539 / LMG 7603 / PAl5).